A 931-amino-acid chain; its full sequence is NEDD4-binding protein 1 (931 aa).

Residues 75–159 enclose the KH-like domain; that stretch reads GKAVRSAKEY…VQQFVKLFEN (85 aa). 3 disordered regions span residues 289 to 329, 413 to 474, and 547 to 571; these read MTSK…HNDS, QEWS…TQVD, and CTSA…NSHS. 2 stretches are compositionally biased toward basic and acidic residues: residues 290–309 and 319–329; these read TSKE…ESLP and QEVKSVSHNDS. The segment covering 416 to 434 has biased composition (polar residues); that stretch reads SSKTPKTTNLRLGSNANSS. Basic and acidic residues-rich tracts occupy residues 435-444 and 456-467; these read HKLEDEDISC and NETRTERHKARD. Polar residues predominate over residues 547 to 557; sequence CTSAKSKTAVH. Residues 659 to 811 form the RNase NYN domain; the sequence is LKHIIIDGSN…LGRNGPRLDD (153 aa). Residues 841–863 form a disordered region; the sequence is LFMHVPNPASSSQQPKNRAHGDH. Positions 884-931 are coCUN; sequence RSASETVWLREALIKIFPDYEQRQKIDKILADHPFMRDLNALSAMVLD.

The protein belongs to the N4BP1 family.

It localises to the cytoplasm. Its subcellular location is the cytosol. The protein localises to the nucleus. The protein resides in the nucleolus. It is found in the PML body. Its function is as follows. Potent suppressor of cytokine production that acts as a regulator of innate immune signaling and inflammation. Acts as a key negative regulator of select cytokine and chemokine responses elicited by TRIF-independent Toll-like receptors (TLRs), thereby limiting inflammatory cytokine responses to minor insults. Has ribonuclease activity. The sequence is that of NEDD4-binding protein 1 from Gallus gallus (Chicken).